Reading from the N-terminus, the 302-residue chain is Acetylglutamate kinase (302 aa).

Residues 67-68, Arg-89, and Asn-194 contribute to the substrate site; that span reads GG.

Belongs to the acetylglutamate kinase family. ArgB subfamily.

It localises to the cytoplasm. The enzyme catalyses N-acetyl-L-glutamate + ATP = N-acetyl-L-glutamyl 5-phosphate + ADP. It functions in the pathway amino-acid biosynthesis; L-arginine biosynthesis; N(2)-acetyl-L-ornithine from L-glutamate: step 2/4. Functionally, catalyzes the ATP-dependent phosphorylation of N-acetyl-L-glutamate. In Hahella chejuensis (strain KCTC 2396), this protein is Acetylglutamate kinase.